Reading from the N-terminus, the 196-residue chain is Probable cobalt-precorrin-6B C(15)-methyltransferase (decarboxylating) (196 aa).

S-adenosyl-L-methionine-binding positions include Thr-24, Gly-48 to Gly-52, Asp-72, and Ala-101.

Belongs to the methyltransferase superfamily. Archaeal-type CbiT family.

It carries out the reaction Co-precorrin-6B + S-adenosyl-L-methionine = Co-precorrin-7 + S-adenosyl-L-homocysteine + CO2. Its pathway is cofactor biosynthesis; adenosylcobalamin biosynthesis; cob(II)yrinate a,c-diamide from sirohydrochlorin (anaerobic route): step 8/10. Catalyzes the methylation of C-15 in cobalt-precorrin-6B followed by the decarboxylation of C-12 to form cobalt-precorrin-7. In Pyrobaculum aerophilum (strain ATCC 51768 / DSM 7523 / JCM 9630 / CIP 104966 / NBRC 100827 / IM2), this protein is Probable cobalt-precorrin-6B C(15)-methyltransferase (decarboxylating).